The primary structure comprises 478 residues: E3 ubiquitin-protein ligase makorin-1 (478 aa).

3 C3H1-type zinc fingers span residues 51-78, 80-107, and 204-231; these read WTKQVTCRYFMHGVCKKGNNCRYSHDLS, SQSAMVCRYYQRGCCAYGDRCRYEHTKP, and EMKKQLCPYAAVGECRYGENCVYLHGDA. A makorin-type Cys-His region spans residues 232–259; that stretch reads CDMCGLQVLHPVDAAQRSQHIKSCIEAH. The segment at 277-331 adopts an RING-type zinc-finger fold; that stretch reads CGICMEVVYEKANPSERRFGILSNCNHTYCLKCIRKWRSAKQFESKIIKSCPECR. Residues 360 to 389 form a C3H1-type 4 zinc finger; that stretch reads AMSNKPCRYFDEGRGSCPFGGNCFYKHAYP.

As to quaternary structure, interacts with p53/TP53 and CDKN1A. Interacts with TERT, modulating telomere length homeostasis. Auto-ubiquitinated; which leads to proteasomal degradation.

The enzyme catalyses S-ubiquitinyl-[E2 ubiquitin-conjugating enzyme]-L-cysteine + [acceptor protein]-L-lysine = [E2 ubiquitin-conjugating enzyme]-L-cysteine + N(6)-ubiquitinyl-[acceptor protein]-L-lysine.. It functions in the pathway protein modification; protein ubiquitination. Functionally, E3 ubiquitin ligase catalyzing the covalent attachment of ubiquitin moieties onto substrate proteins. These substrates include FILIP1, p53/TP53, CDKN1A and TERT. Keeps cells alive by suppressing p53/TP53 under normal conditions, but stimulates apoptosis by repressing CDKN1A under stress conditions. Acts as a negative regulator of telomerase. Has negative and positive effects on RNA polymerase II-dependent transcription. This chain is E3 ubiquitin-protein ligase makorin-1 (MKRN1), found in Notamacropus eugenii (Tammar wallaby).